The sequence spans 506 residues: uncharacterized protein (506 aa).

The protein belongs to the Mg-chelatase subunits D/I family. ComM subfamily.

This is an uncharacterized protein from Salmonella typhimurium (strain LT2 / SGSC1412 / ATCC 700720).